The chain runs to 18141 residues: MQRQNPNPYQQQNQQHQQVQQFSSQEYSHSSQEQHQEQRISRTEQHVQRSQVTTQRQVQQHHGGSIGGAYVPPSLTHVYAQGDISPPVFEQIFKNARFAQGGNALFEGRLRGNPKPFVTWTRKGAPLLESQKFRMSYNEATGDVSLLINQIGPGDEGEYTCTARNQYGEAICSVYIQPEGAPMPALQPIQNLEKNIYSNGYSYTSIEEEFRVDTFEYRLLREVSFREAITRRSGYEQDSQLSQELDRNQGPAQAPQISQKPRSSKLIEGSDAVFTARVGSNPKPRLTWFHNGQRLVASQKYEISYSSGVATLRVKNATARDGGHYTLLAENLQGCVVSSAVLAVEPAAETAYEPKPVDVMAEQLEAGKALPPAFVKAFGDREITEGRMTRFDCRVTGNPYPEVFWLINGRQVRDDASHKILVNESGSHSLMITNVTRLDAGAVQCLARNKAGEVAIEAQLNVLEKEQVVAPQFVQRFSTMTVREGEPITMSANAIGTPQPRITWQKDGVQISSTAERFVGIDGGATCLEIPRVTANDAGWYQCTAQNIAGSTANRARLYVEVPREQPNYEQRRLNLPRPTKVIEPEPIPGPEIIYLRHVERAKPHLRPGEEDRVYPPPQFIIPLQNVQQTEGGRVHMEARIEPVGDPTMVVEWYLNGRPLAASARATSVFKFGFIALDLLSIMGHDSGEYMCRVTNASGVAESRAILSVVQRPSIEQSSQNPNSLQYINQLEDYSRYQRTESIDEQLNQAPQFIRPLRDLGEFEEGKNVHFEAQVTPVNDPSMRVEWYKDGLPITASSRITAIFNFGYVSLNILHLRAEDAGTYTVRAVNRIGEAISQSSIRVHSRSQVTADLGIPEQQRYIEKVEELEDYRKSQQRRHVQEAAEAIAPPQFKTPIQNQLDLREHAHAHFEARLEPVGDSTMRVEWLKDGQPLEASSRITTYHNFGYVALTIKQLTIYDAGTYTCRAYNAMGQDTTVAQLTVISKNEIVSESQHPGGLQKIQHLEDSSRYGRREEEETYITQAPRFLGPLKGTTKILEGQRAHFEARVEPQSDLGLVIEWYHNGRSITAANRIQTYYDFGYVALDISQVRAEDAGVYLVVARNKLGEAQQQATMIVETRSSIDTSSMHRGLYEKTQNLENKPFVEPQYDIEEISKSKPVFVTPLSDPKPIHDGKNIHLECRLEPMGDPTMRVEWFHNGRPVTVGSRFRTYYDFGFVALDIIKATAADSGEYTVRATNHLGTAHTSACVRVIDHTDVVTETQNEQSLEQIQLLEDSRRRHHQEEDITIMQAPQFTRGLHNIETIEGTNVHLECRLQPVGDPSMRIEWFVNGKPVKTGHRFRPAYEFDYVALDLLGCYAIDSGVYTCQARNQLGEAVTSCSVRIIAKNDLILETQNESGLQKIQYLEDSTRHRRSEFVDEVVNIRPRFLTHPKSLTNTREGGHAHFECKIEPVTDPNLKVEWFKNGRPITVGHRFRPIHDFGYVALDIVHLIAEDSGVYTCRAVNLIGSDETQVELQCRSGEQIVTVTQNEAGLEQIHYLEDRSRYTRREEIDESTKQAPVFTTSLKNVEIKENQRAHFECRLIPVSDPSMRVEWYHNNLPLKSGSRFTETNNFGFVALDIMSTLPEDAGTYTCRAYNAVGEAITSAVAVVHTKKSIYLESQHETALPRLQHLEDGSKRQRISVQDEFVSQAPVFTMPVRDVRVAENQAVHFEARLIPVGDPKLTVEWLRNGQPIEASNRTTTMHDFGYVALNMKYVNPEDSGTYTCRAVNELGQAVTSASLIVQSKTSIQLETQHEAAMHKIHQLEDHSRYQRREEEEYTVTTAPVFVTKLIGPSNLVEGQSAHYECRIEPYPDPNLKVEWFHNGKPLSTGHRFRTTYDFGFAALDILTVYAEDSGEYTCRVTNNLGEAINSIVLNVTSRSSIIHETQHEEALTKIQHLEDTSRFQRKTDEEQFHAERPQFGRPLRNAKVNEGAPVHLEATLIPVNDPTMKVEWYCNGRPIQTGHRFKTTYDFGFVALDILYAHAEDTGTYMCKAKNAIGEAVTTCAVNVTANKTLDLDTLDAQRLEKIRQLETYAPPPKPVVEEKGQKPIFLTPLSNLEHLKEGEHAHLECRVEPINDPNLKIEWFCNGKQLPTGHRYRTTHDFGYVALDILYVYGEDTGTYICKATNQLGEAVNTCNVRVLNRRSMILDTQHPDALEKIQKLESKVPNARTEVGDAPISPPHFTAELRGSTEIYEGQTAHFEAQVAPVHDPNLRIEFYHNGKPLPSASRFHITFDFGYVSLDITHAVAEDAGEYSVRAVNALGQAVSSTNLRVIPRGTIISDTQHPEGLEKIRKLESTAPHQRQEPETPGTRQRPVFTQPLQNIDRINEHQTAHFEARLIPVGDPNLKVEWYRNEKIIEDSSRITKQHDFGFVSLDISHIRKEDEGVYMCRAVNPLGEAVTTASMRVVSEASIQMDTQHPDSISRIHQLEKPLAPRPTEPERLFEKPIFTQLLTGPSELWEGTHAHFEARVVPVGDPSLKFEWFINGVELQMGSRLRTTHDFGFVTLDITAVVPEDAGVYMCRAYNAAGEAVSSTAMKVKTKSNIDGQPLIPESWEAIRLKEAAMNRVPEMFVDSTPQQAPVFTTHLQSYDKLHEGQHVLLEAQVEPRADPNLRIEWFKNGISLTTGSRIRSTFDFGLVTLSINGLRADDSAIYTCKATNQVGEAVSTSSLKIEDRHWLQAESLHPDSLPRIGELEAPKEGRPEAPEPTYETPVFITHLNNIECKESDNVRFECNVEPARDPTMSIEWFYNGQPLQAAAKFKSIYDFGYCALDLTNSYAENSGVYTCKATNSKGSATTSGTLKCTGGKTMFLDTQHPQGEAGLEAVQETEEELANRYTSKTTKPETQYPPPVWTKPLQAEFHLSEAQPIHLEANVEPKEDPNLFIEWYFNGKMLNHGSRFKMTSEFGFVTMDMIEVYARDQGIYTCKAYNKAGEAFTSTTIFCSSKENIIESTQHPKGAEGLEQIQDLEDSLRKDGSKPEQPDLGIPPRFTTEFVNIADIGEGELAHFEANLIPVGDQSMVIEWFYNGKVLEASHRVRTIYAFGTVALEVLGTKIEDTGTYTCRATNKHGTAEISCNLECVDKPRGQKPRFTSHIQPLEGLKDGQSAHFECTLIPVNDPDLKVEWYHNGKLMRHSNRIKTVSDFGYVVLDISYLQDHDSGEYVCRAWNKYGEDFTRTTLNCGGRGGVFYDSLQPDSLQRIRELECPQGQQADTSAPLVAEPPKFITQIVDVTKLVEGQSAHFEARLTPITDPDLVVEWYFNGKKLPHGHRFRTFHDFGIVILDILYCYEENSGVYEARARNKYGEDVTRASLKCASKSSLILDSQLPRGMEGGLEKIANLEYSMVRTREETTEETKGKAPVFTVPLENIENLREGENAHFEARITPADDPKLKVEWYWNGRPLKAGSRFRTFCDFGFVILEISPVYPEDSGEYSCRAINEYGEAVTTATMKIQGKRSIIMESQLPKGMEGTIDRIAELEGLGSRSTEFVPDDDTGKPPEFITSPFDMVIGENALAHFECRLQPINDPSMRVDWFHNGKALWAGSRIKTINDFGFVILEIAGCYQRDSGLYTCKATNKHGEATVSCKLQVKGRQGIVMEPQLPSNFRTGTESLQKLEETMHKREELVTEDEQPNPPKFTEEIKDNLDVPEGGPIHFDCRVEPVGDPTMRIEWFYNGHVMATGSRVHQLNDFGFIALDVDYIYARDSGEYTCRATNKWGTATTSAKVTCKGKHNIVYESQLPEGMTSEKLKELERGRIPEAPKVVEEVFGPPKFTTQITSVTVDEAEAVRFECQVEPKTDPSLRVEWYRNGKPLPSGHRYRNIFDMGFVSLDILYVYGEDSGEYVCRAINNYGEDRTRATVSCKKLPTILLQNQVPRGMKRSDALTQMEATIKKYTSEVHLTEDDLFDPDRKQPPRFVTQIKEQLTLTEMAVTKFECQLAPVGDPNMKVEWFFNGKPLLHKNRFQPIYDFGYVAMNFGWVYPEDSGEYVCRATNLYGKDETRAIIKVSGKPGIVYDSQLPAHMQSIDRIREMEASWQVVPDEVDPDAKPRTKPVFVSKLEPQTVEEGDPARFCVRVTGHPRPRVMWLINGHTVVHGSRYKLTNDGMFHLDVPKTRQYDTGKVEVIARNSVGESIATTELKVVARSDDYRNVLKNSPRPWYDYELAAYQKERQENELEKVFDERKQVLSEQSSHTLKGVEHLKPKQYKPPTPDWQQNVKAKKSEDYYNKLQTLETEQLLKETNLRRDTHQYAIPGEKVVSSSQAKGMAQSYEENLQEKTSTTEVQAAPPKGIAQPSESSVHGREVHMNKQQQVQKEIQGDLEITRKITATETTEVEHKGTIQERVVQGPVKPAKAPVFTKKIQPCRVFENEQAKFEVEFEGEPNPTVKWYRESFPIQNSPDLQIHTFSGKSILIIRQVFVEDSAVFSCVAENRGGTAKCSANLVVEERRRAGKGGIQPPSFVTTIQSTTVATGQLARFDAKVTGTRPLDVYWLKNGMKIQPSIKFKMLEEDSVHTLLIIEPFAEDSGRYECVAVNAAGEARCDGDCIVQSPSKPEKPTTPGSEKAPHIVEQLKSQTVEEGSKVIFRCRVDGKPTPTARWMRGENFVKPSRYFQMSRQGEYYQLVISEAFPEDEGTYKCVAENKLGSIQTSAQLKVRPIENLDAPPTITALKDVSVTEGMPAQFKTTVTGKVKATSVQWFREGQLIPETPDFQMIFDGNSAVLLIGTTYEEDSGIFTVRVTSSTGQVESSAKLTVKKRRISAFQLRTIDSAEDESSSSGREDSAPESPHAFQPGQQPGQQFGQFLGVNGQGQHQGRSRQKKPKVRSKSLQPATKVIPWRKSSRPTRGRSLDKGVFLPGFKPEPVKSWTEETINLKATPIEKKKPAPKLEAAKVVLKSIKTERDQGIMSLGATLEQIIAGKTEKEAIPWITMREKLKAVESVQQQLNKFDLDEVYLQPLEGQIETEGQLPQQAQVEQVQRTKEIQRLKSMESVEIMEMTDQIDKLITQQQNAKDLIPWKEMRQQLKSVQRVTKQIDKFKIEEVELRHLQAQQAITEEYQTGTAEETVVMIDESSKGSISKVLRRDEQLQYEDQSNIYKQKFITTEDVNIMHVSEREKLEAQRLIREQQAVNWRQQQQRPQLQPLTSVEDTVISQTSERQKLVQQQSFIEEAQRQQFVQVEDSQMMSLEEYEHQKIINQRTQQEAFSWRQPREPQKFIQVEDSTLLHLQERHDTQEQQLLQQQPVMWDRGRKKPDQPQYVQPQEQRVKEEFVEKPKTYEEMHDELVEPTPIEQPQPVPVMWERGKKKPQPQEKTFEEAHDELVEPTPVQQPEPVPVMWERGKKKVAQQETVLSQEVVQTSQVVEQQIVEETKKTAVRRVIPPREPEQKVEQVTLKPTPRPRPKEAVKAEEIQLKPLRSTRPVPQPVEAEQKAYEEATDELTEEPIPQPQPVMWERGKKKPQKPQEEVTEIPKTLEIAVDTLEEEVPKPTEPQPQPVLWARGQKKPQKPDEQKQELPKSLEIAVDTIEEDLIKPVQPEPQPVLWERKKKKPQPQDVIEEKLDVAPTKTYEKAVDVLPDEPKVEEKPEPVLWQRGKKKIPKSEPTEEVHPDEVDAQIETVVKEDEMIVEEKRRIKKTKRPKSTKEVTEELFEEQPEEEISPEEEVPQKEVIEEIEEIVEEKRRLKKTKKPKLTQQVTEEETPHEEIIKESEEVVQEQEEIVEEKKKVKKVKKPKTVAEKQLKEEEIPTEETVEEEETAEDQQLVVEESKKVKKVKKPTGTVEKTDVEELPGEEVPVEEVPVEEVPEDVAPEEELIEEQEEIVDQDEIQEQKRKVKKAKKPKKTIEKTEIEIEEDQPEEEVLQEEIIGEQEEITERQRKVKSIKKPKKVVTEKTVDQTEQPEKPEESQAEEVKETVTEEPKKPKPAPEEAKVEQVEKISLKPAPRKQRLLPEKEQVEEVLLKPVKKIVAVSEAEQPETPETEFEVKEFAITTTEDILDVTKKRVKKKKPKTKVAAEESTEEPAEETEEFEEEATQPEEVQPVEEIPEEPQVKEVADERKTAPKPKPRKEEIIEKVEEVALKRVTRPKKELPQEATIEEVRLKPTQRTSIKPEEVKLEEVDLQHVEKKEDEIVQEEKRKTRKVKKPKHEDLPEIPDAEPTQLEEAEHIELEKQPKPEEDQPQVPWKRGEKKQPVEEVLEEKKWPSGKRRPLPEQQPEEVQLKPIPSKPIEEQQKPEKAIPGPQLVPEEKPESEEEELELEPLKLPEDKKPKEPKAKKEKKKKPKLKKATPSVDEVSEEVAEPFDEPIAEEDEVEEMPVDDVKVVAVSEDVLPEEEVVPTEETPEAKQKAHKKRTKRLKEASVEGQPQLLEAAIAEIEKVDEISQEISQKTITLLKKTEDTRPQFITTEQLIELDVEDVRRDLEMKVTSNIIKKEKRRVVLDDSQPLPELELITQKRIQEGIDKVADEELIEDQQLIQNQQETTTSEVIGQERKLVKKKKKEIKPPRITEKLRPRQCVPEEPTVLECKVEGVPFPEIKWYFNDILLFASEKYEITVMEQVAKLKIAKVTPSDVGVYTCEAKNEAGVATSRTNIILEKEQGVPPQFTKPLKIEFIEEKQPERLKVTVTCQVTGKPNPEVKWYRGIEEVIPSETVQMFYDEKTGDVALEVINPTPNEAVVYSVQAQNQFGRAIGNANILSRVDEVPREILKAPTVTPLSAVVVPTGGTLFFEAKYDGLPRPEVKWMRNGREIIENEETIIETTETTTTIKVVNMTRKRTGKYEVWAKNKVGEAKSSGSVVVSDQKPDEQIKPPRFIQPLEPKYFGEHEVAIIEAIVESEPLSSFQWFVHNEPIKSSNEVRIVSQANKSTLLIENFQSKFVGPFTCRAENVGGSVTSTATVNLIPQEEAEEFESPRFVEELVQPVEVMDGEALLLTCQVTGKPTPKVEWYHNAEKITENKETTISQDLQGVCQLQITEVFPENEGQYECVATNKIGKSVSKTNVKIQAFEYIPDSEITGLTGSEEDLLDRTLSIDEQAPKIIKKLPEKIEPKEGEQAKLEVKVVGKPKPKVKWLRDDEQIFASEEYQIENFEDGTSVLVINHVYPDDLGTISFEAYNPLGVAVTTALFAVEGIVGSKDYRKPEWVSQMEEMQVALKAAKCSPSLLNEMRDCRAALGETAKFSIQFAGNPIPDIQWYFNNVQLRASEKYRMVVQEQEATLEIMKITSEDCGYYNCKLINEIGMTMTRAKFDISSTSTIVEETKAKTTVKKKSGKKTMVKRSGASESQNVQKTEIRIIPTSAVETSMNVIKVKQPVSVLVEKSEISEVLVVKDREVADAEERSSQLIEEIEEEEEIEEKVQHDEEDEVEVQVEQKETYTSSKKIEITKTVELIRTKISEKIITIEDVQVLSHHEEVQWLLESIEAESFGQIGESALRDLATIGLLLRYGCEHYEITYMYEQNIFISLKKPESQSALVQLVEREGHEELISQILSESSNEDETILAATVGFKAFIRMIQTYEITIEIVIRKFVREDFISQDWKICGKERIVETSQIIESHEAITHVKIETATTKVEKLFKKQEQEHVQNLEQQEQVKIQVQTKQIAQMNTKIKKHKKHKQQEQEVSETTIQCEQKETLAHETSAELPQSETLEQIEESLSTYETLPIQNLSKDTLQTVAVSVTTELSTPSPTASRVQEEILPQKVLAINEEVLPLDEFGLRKESPRPKENKLTENIEVRLKHALNVSHAKTAESSKELPSKIPKSVKAQRKMKESRSLVVEAPNAEEAIEDLKPLKAVSQEVQSDILFSHEITEEQHQALETIEKLKPTSAIEDTVQQKLLSQEELIIAEVLPSETVGRDVTDVRPPGETISPRLTPNMSLCITECQPEDSIGEMQQAAKERMETPSMSVTESKAVGGQELEVLENVDHMPLITQPTKGLADYTIKAEEVPVQVQEIITFDSLERETVAKTQTAKSNALELFELSEGLVSSTADSHSPIAEDLPIFEKDVKEATIDMQMQHHVTTSETVSNENAVKDLKAVDTPKMAEGTLGQSSALTIGETQQMNLVETTVELIEPNVESTKPAKGALTEAYGTAESNEETLLESLGLVPDDNRKIEQGKVNISEGEYVAKVQTTTVTDTEGEFVSVAPKLVNPKFDFVEQSALQIKQDTTVEKEEILSSNIELAPQLATSNMFPAELKVTSIYEVQPGLTSSDIITEQTKSVSANQVFETMSIGVTSKPDMLESTSHIDAFQHPEFKTGDTILDENQQPLEVTNVQITESSTDIIDVLPNQKLTKAETVTDGFKYAEGLVVLPMESTIDKTEDTKPTAVNADISMHQQFGTDVREQEPLESTLTRTEDLKPQTQTTESQFGLLQSLETSSCVTLEGESVLSVKERHPEQSAAIGTSSALQVANITRPQHMESLDRLDEQKVPYYQANVNIGEITLPNVEKIDSFDVLSDLNTPDYNKSSKGRVQLIESTTSLKTTTAVVSESTEELKDLNITQPVHIKPKPYESDQKISISEQTNVLEHVSSLNPVLPALETIQSSIKSLHEINVRETDILEKEESLKDVDHISGRLAKIILDCTTGIAQVRQEETLEHEEDLKAPLIPLEKAIPASSELHRLPLTEYVQEQQGTSDMTDFKVSNKCASPNIDHLYETKSSEMIVYDSSINSVDSEFPAGIVPQKSLVPFRHTMVTENVAFNASENFEILSADQQIATNVQDSLSQSIIAEDQIAFETEQNLGLETTPTHKPKLLKDDQNLHAKLVDEATVYEAMGQEQKVDKYNIQQAEITHDLPQVYATDLQQTFEAEKEITTREQSYVAATTDIIPSRLGLAMTTKTHPVEGIDVLLSSPPKPSLAQTNYEETQHEVRVRETQAIEESEELTDGRLLPVSAVESIDSTFKVTSDSQQPPVFDKELSIPTVSPLEARAKPSLNLLQGTTTFDVIPLESSVLLKDTHVAVQKAQQEYVAQVESNKVHVQMDNLVMHKEDIFENAEIENFCKPITEGTQLETVVIEVVPIDNVGGIHLAPQPSTLLATLTSTDIVNQSHVIDTQVPLEMESEAQAPLDNIAQARIKSAEDHVHTNVSEVNVYEQTKAIQDQNKHGLFVKVSKNSDTSKAYLTTIQSTFLKEDILPKPNILQDTAQAAADELQSLVTEEVVSVSSIQETYELKIPLQKTANLTQQTPQNSVNVCQQLAYEETPDIAFEPHALTRATTSSVPTFLKPAENATVNIYENIEGHGDFKPGTVNLTSNSNLNSELVVSVVQEVTSVPSLGSLATVEPQELKAMPVTKSSTNLAYSEEVKGNKQEFTKIETVEEDDKQPETTVTVEELPYEEEKPEEIQELPEEVCVVETVTEDGKPKKKKIRTRVIKKVKGDKQEVTKIETVEEDDKQPETTVTVEEVPYEEEKPEEIQELPEEVRVVETVTEDGKPKKKKIRTRVIKKVKGDKQEVTKIETVEEDDKQPETTVTVEEVPYEEEKPEEIQELPEEVRVVETVTEDGKPKKKKIRTRFIKKVKGDKQEVTKIETVEEDDKQPETTVTVEEVPYEEEKPEEIQELPEEVRVVETVTEDGKPKKKKIRTRVIKKVKGDKQEVTKIETVEEDDKQPETTVTVEEVPYEEEKPEEIQELPEEVRVVETVTEDGKPKKKKIRTRVIKKVKGDKQEVTKIETVEEDDKQPETTVTVEEVPYEEEKPEEIQELPEEVRVVETVTEDGKPKKKKIRTRVIKKVKGDKQEVTKIETVEEDDKQPETTVTVEEVPYEEEKPEEIQELPEEVRVVETVTEDGKPKKKKIRTRVIKKVKGDKQEVTKIETAEEDDKQPETTVTVEEVPYEEEKPEEIQELPEEVRVVETVTEDGKPKKKKIRTRVIKKVKGDKQEVTKIETVEEDDKQPETTVTVEEVPYEEEKPEEIQELPEEVRVVETVTEDGKPKKKKIRTRVIKKVKGDKQEVTKIETVEEDDKQPETTVTVEEVPYEEEKPEEIQELPEEVRVVETVTEDGKPKKKKIRTRVIKKVKGDKQEVTKIETVEEDDKQPETTVTVEEVPYEEEKPEEIQELPEEVRVVETVTEDGKPKKKKIRTRVIKKVKGDKQEVTKIETVEENDKQPETTVTVEEVPYEEEKPEEIQELPEEVRVVETVTEDGKPKKKKIRTRVIKKVKGDKQEVTKIETVEEDDKQPKTTVTVEEVPYEEEKPEEIQELPEEVRVVETVTEDGKPKKKKIRTRVIKKVKGDNQEVTKIETVEEDDKQPETTVTVEEVPYEEEKPEEIQELPEEVRVVETVTEDGKPKKKKIRTRVIKKVKGDKQEVTKIETVEEDDKQPETTVTVEEVPYEEEKPEEIQELPEEVRVVETVTEDGKPKKKKIRTRVIKKVKGDMQEVTKIETVEEDDKQPETTVTVEEVPYEEEKPEEIQELPEEVRVVETVTEDGKPKKKKIRTRVIKKVKGDKQEVTKIETVEEDDKQPETTVTVEEVPYEEEKPEEIQELPEEVRVVETVTEDGKPKKKKIRTRVIKKVKGDKQEVTKIETVEEDDKQPETTVTVEEVPYEEEKPEEIQELPEEVRVVETVTEDGKPKKKKIRTRVIKKVKGDKQEVTKIETVEEDDKQPETTVTVEEVPYEEEKPEEIQELPEEVRVVETVTEDGKPKKKKIRTRVIKKVKGDKQEVTKIETVEEDDKQPETTVTVEEVPYEEEKPEEIQELPEEVRVVETVTEDGKPKKKKIRTRVIKKVKGDKQEVTKIETVEEDDKQPETTVTVEEVPYEEEKPEEIQELPEEVRVVETVTEDGKPKKKKIRTRVIKKVKGDKQEVTKIETVEEDDKQPETTVTVEEVPYEEEKPEEIQELPEEVRVVETVTEDGKPKKKKIRTRVIKKVKGDKQEVTKIETVEEDDKQPETTVTVEEVPYEEEKPEEIQELPEEVRVVETVTEDGKPKKKKIRTRVIKKVKGDKQEVTKIETVEEDDKQPETTVTVEEVPYEVEKPDEIQELPEEVRVVETVTEDGKPKKKKIRTRVIKKVKGDKQEVTKIETVEEDDKQPETTVTVEEVPYEEEKPEEIQELPEEVRVVETVTEDGKPKKKKIRTRVIKKVKGDKQEVTKIETVEEDDKQPETTVTVEEVPYEEEKPEEIQELPEEVRVVETVTEDGKPKKKKIRTRVIKKVKGDKQEVTKIETVEEDDKQPETTVTVEEVPYEEEKPEEIQELPEEVRVVETVTEDGKPKKKKIRTRVIKKVKGDKQEVTKIETVEEDDKQPETTVTVEEVPYEEEKPEEIQELPEEVRVVETVTEDGKPKKKKIRTRVIKKVKGDKQEVTKIETVEEDDKQPETTVTVEEVPYEEEKLEEIQELPEEVRVVETVTEDGKPKKKKIRTRVIKKVKGDKQEVTTIETVEEDDKKAETTVTVEETELSAPSVGKVQLKKRVIVQKPEDAVTVFELPERKSVILSEKEDGTPTKTVIKTRIIKKIQGPNMEVTKVQTVEEYEKAPQTIVSVEKFNTPFPELPEERLSEVVMLPDEVFESEAVDEEGRLKMIKTKKRIIRKPALDNTEEVTEIGIIEQDNVEPIYSVKIQERPLTESKPEDSKLIELPEHVTELNVILPDGKKKRRTVKSRAFKKSLDDDLDEVTTIHIIEEEDKEPLTKVNIEVVPSDEISITPIPIEELPEETVFTEELDENKKPKKKTTKTRTFKKRGPDDDEYFQIQTIDEEGKEPISLIRVVSDENIADIIDISKLDDEKVLKHKQKPHKHKDQYYKEYTITEPEEASADALQKPTKDKTPKQKKTLETPIEEVDETVIIDEGTGEQTDQIAIKRKPRKVQGNVQVEAVDEKPIEKKEKAKKKKVVKTKRDEMDDYIQFLIHQEIPKTVLQPYQRTEMELPQRARRDSSFKQPVKLTPMKIEKVEFKKPKMVEISSVVEFPQMLKLKAPKQRPQEEKKKKNEASFKNKKLKSWIRFVPYAPYCFPYVVTELETNREVGELSRNVDEAEEVLKLRPKKFKHSKPEKAELEEADLGAYESDHSDKSNKELLHPKYKRGKKEKIETPDESRKLKFGKGKVPQNEEASEEVNLKPVKLDIAEIEDAEMPVRTQEEEVVKKKKPKKSSKPEEGLQFEPIEFEEMERTSDIREESDTSVSVDTSTQEKPIYKKKKKVTPSPQKNQYKILPGQPREFEETPEDDLNLRKRQGERPDDDKADTKLKPFYKFEVLDLEPEGVQAETVPLSETIAKEPKKKRKIKVKTEQEDNTIEIVPLSPEDNDEQIFEITVTSSEIPQGDAKAKTIGKKKVKRMNKQELDDFVTELQEEPNQEVYETRMSDFYEVKLTELPSEMDSDKPTKRILRHEKGDEVQVLEIVESVVAPGEEPFYEINVISSANTEGDSEEITTDKIKKKSRKIKKDDLDAYIQQLINAEIPVTELEKYEKIDVDGKAKKPKKLKAKTKKPIIDEGETLQVGVTEHEPTKKLKTKKPEEKKNVIEKELAEHEAVPEYDEFLINKTESERPQEKRVEETEKDIVPIVDKVLADLNDCLPFVVVEEDLKDMPLATDVIALEDEKIIRKRKVRAKKDSKQYEIEIIETEKPGDIPDEARVIVITTEVSGDTIDGPAPSTTEAPKKSVRKVKKEKLKEFIVNIVEEAPLDHVSEIYEDVLRTPFRESSEKEDIPSFTTTVVEDEIVNPVLPEKIKTVDDVRVPKDKKKKIDNQKKIKISEFEPTPTSEDSTIEEYTPKLSEHDEDLQTDEYSVDVKDSLPKSKKKSTKKQKKESLPGPISLYTIRIEETTPEPITEKIYEDGKEVVRVINKRRIKKKAGPKEYLIEVIETYEDNNPEADVVIRTIETTPSIDSKPQEDHKIQVVQEKKPKTESLDNYIQKLIDQEIPQVDHKEFKATVLETSPESKKAKKIKKHHKKTTEVIDGIPITVIEVTIQETETDDEDFKPDEVTLKEIDHENAEEAPKVLKSKVSEEKPKSKKEKSLEFKIAEEDKPKPVLEDISEDVQVVQIIEEDGTPKQVEIKKKKVSRKHGPKEQVFEITETKAIDEPLSEVTVVEITDEQPQEEVLPAQEKKPIKKQKKLKPEDVNTYVVKVLEELTEPTQFETIPEDADDKPQPVIEDISENVQVVQIIEEDGTPKQVEIKKKKVSPKHGPKEQVFEITETRPSDEPLAEVTIVELTEEGLNKDIVIPQEKKTVKKPKKLKPEDIQSYVIRVLEEFNEPQWPASTEKPIIEDIAESIEIVPVTEEDGITKEVEVKKKKVSRKQGTKNQVFEIIETKTSDEPLAEVTILELSGDKSQEVTILPKEKKPIKKTIKLKPEDVESYVVNVLEEFCEPQSFESPEPTEGEAHETKTKTKKPKKPIVKAPENVILIEEMAPETVIENIVNEIGEEVKQVKTTKKLKKKEGPKEYLIEIKETYEENKPEGDIEITTTELVPEGSPDASDDQPVIVVQKIKKKKPVKDDLDKYIQQLIEQEITKTPLEEYEPTEMDSKKKPKKKVKSHNKKTIEVIDGLPVTIHEFNVEDIVSEPEDMETPKTLLDEIKEIPQLPDDSSKYLVNISDEFGEADKPIKQPTQDQPIKKEKPLKKKKDVEYPVSLEAFDHTVKVVSEPTLEGTVKEVTVKKRKVSRRKGSKDHIFEITETTSEDRPTAEVTVVELSSDEVLDSEEKPKHERKIVKKPKQLKKDDVEEYIINIIEEFIQPIPVGLVEDEVEKVQKEETKKPKKSPITYIATEQEDNDNNYDALVKEDLDQPIERALEKPSSPLEYTISVEEDSVGEEQKQPKPKKISKPKSIKQPSVDKSPDYLVNVISEESIIDEPIPEDYVVTEAAEEKPSEEPTFKVEELETEAVEKEVTDDDKGETTKQSVTKRKIKKLVGPKEEIIEIVETKTGDTPEYEVIVTTEEVQEKSKEAPEEKKAKTVRKAKKIPKDDLQDYIQKLIEQDIPKTELEKYEKIDLDEPVKMKRKPIKKVKQSEEQPKEETEEPIEDKPVEKISEYSEVDSDEPKLTVAVKEFIPEKPEEKPFEIVVLEETVESKREPDEEGKVREKVVKTKKIKQNRGSVEVVHDIVEEIDTDTNESVITVTTTVPTETPDQDQPSVKQKRTKKIKKDEVEDFVKRVIEEEAPQPEGSVDLVVIEDFVPKPSSEKRKKKPIKDKHTSVEEETPHEDEVLLIESVPEDSPLSDDLITVVDSVPIEEEPENKVNQIEDTKKPEKKKKPKPSAKILEENVPEDTVEKPLEALHTDSDLEKPDVQEFSISIKEEEQKHTHPEKKKSSKISSEQPKQPSTEQYEISVTEHDLKPEEEKPFTVQVIQSETNVEETKDDTGKVHKQVTTKRMLRRPAGEGEIEIIEVVRDDQPEAEITIVEYEPEPVNQDEKPKEPKKKTRKVKKDDIHDYIQKLIELETPKTELEKYEKIEFEPIVKDKPLDSPIDVLDESPKEVQKKDKKSRSTKVPNEETPVQEQYAKVNVVEEEAPEQPEIPVQILEVKPVEVDVKEVITEDGKPVQEKTTKRVLKKIGPEEQTTFKITMIESEDNDSVTVIVDEEPEIASPQSIEEHPEQSKEKLAPKPKKTVRKVKKDDLSDYVKKLIEEEIPKVDLEKYEKVEMPEKPVKLTVSDSIPEEPKPDKSQPISVLPDTTKPKKTKTPKTPKTEDTDQQVPDEPTETTVDTTDIPELTPTQTAQPEDTATAQITPSAQEEKSTQDDTKDTIQKTVKHKKTKPDTQKSVETSELPEVHKDYQISIIHEELVEEEQPEKILEVRVIDEVAEVEESQPIVEEVEDEEPQPATEETVEDVTKPKSKKKKVVKKKTDDHDELIKKMLEQEIEKTELEKYEKIEFDVPKKLKPEFAALEPIKIERKEQKPTKVTILDATDVPKTVKLKPSKRKEKPAEELTVQLPKFRLKARMVLVEYPPAPLIPKTTDIGAIKDNGELSRNIEEAEEILKFKPHKTKKIKKIKDDLEKVELEKYEKYISSEEEPEEKTPYKKPEKAPKPEEKQEDVKLKLGKGKKKPKEEEAPENVTLKNIPQKPQEVEEEVELKQKPKEVEIVEEQTKKPKDGEFVVEPFEPSEFDRPEYVPDELEQIEHPEIPEKVKKPSKTKYKPKDKSKSEPETIVSEIVAGVPKEEEAIPEQDVKFRKPERDAPEETDSEIKLRPVPQASKDENPDEQALVTPKAEEPIPQEIEDKAIDDEKKPKKSKPKKVQPKEQEIAKEEPEEFEVSVKEEEALVDKPIEIEKPKDVKVKEKKPKEAPVSEVVVIEEEPKPEEVPEEIPVEYKITTTVLEPEDAPKEHQVKVIDFDERQETTEEVIEEKVVTRKKKPKPQQPEEFEVTLKEPKEEQIQPDVVSAEISLPIEEPEQKPEQYEVELKITQTTPEEPNDVQIAVKEKVKTKPVKKVKEDKIVVVEAEEEKQPVEETIVEVEKQEEKKKSEKPKSYEFKISETQSIEEKPIEVAEEAPEETPKVVEKKVAEKFDSYEFTLKETDEEKVITVDDQPEEEAPVEVVFKKKPKEPEAVEAEFVMTEPKIVEETSVETAIKQKKTKKPKKDEEEAQLAIKVVESEAPVAEEVFSEAPESKIVEEEVIAEEKPKEFTIRVSESEPKPEEPSVEQFTVKKRKPSVTFADEPATEIVIKESKPAEVVTEDAHIKTKKPKKKVTDVEAEELKIKITEEVPQEIPILEEVSEEEVITETKKTAPVVEEKTYKIGIKETEPEKPAEAIVEEEEPVVTEPIEEAPKPEVFEEHKVRVIEETPRELVEEVIEEEVKVIRRKKPKPEIKEEPEAEVTVSTPKPVEEVEATSSIAVIPEQPTEEEAADLKITIIEEETPPQELVQEIEEIEIVEEPKAPEEQPTDFTFATKDSEKKPTVEELPEEQVTIQKKKKKAPVPEVVEEPEAEFLVKPKTPVQEVTEEAKITKSKKPVKEEEAAAELKVTITEEIPTEPEVQEIIEEIEEIEEEKPAEYVIEVKESQPEAVEDKEVSLPKKKPKAPIVEEPEAEITLKPKVKSEEVQEEAKIVKKKPKKIDEVAVADELTVKVEEEVVPEPIVEEEVIEEFEIKKKPKEPEPEDIVDAAIVKLKKPEPVDADEVVAEVTLKPKAKTEVTEEEFSVDVKLPKEKKERPVEIEEEEIIEEAVVIRKKPKKPFEPTVEDLEETEFSLSFKKPHTINEGVEEAATVLKKRPVKPTTLDEAAAELSIKRQEEEYEEGEDIEEFVVSQQRKPKPLQITEEDEEAYTVKKLKRRKQVDIPEYADVENVTFRARSTKTKEDVDQEFNIALDSYAEEEISMSGKVKLKKPIKKTFSEAADEAKIKIIQDFDDGEEPIIEEIRDDEDTIDEVEEPEEYFVEELPPDEVDFKLKPKKHPKPAYSVQDEEEEQFLIGIRHPKRDSVTYDEDSLTFKKKRKVVQQLFNEDGASLNITREMNVEESENLNIMYSICNYIADNNEAINLVEGEKVTVVGRHSSEWWYVKKSTTEEEGWVPAQYLMEPEEYAQYVQNKLHEKIDKLPVFERPGPEDKPIAPRFIEKLQPIHTPDGYTVQFECKVEGNPRPQIAWFRETAIIKPSQDFQMFYDDDNVATLIIREVFPEDAGQFTVVAKNAAGFTSSTTELIVESPLSDHGSDATALSRRSMSRESSLADILEGIPPTFSKKPKAQYVDENTNVILECRLVAVPEPDIVWTFNGEDIDEEEIKNVRIVTESDMHMYCSVVHISKVKKSQEGTYEVIATNREGEARLPITLKVRTTDKEAPQILEPLRNMVIREGESVVLSTQIVGNPPPKVTWYKDGKPVKNAKSDKDLHTLTLITPQKSEKGEYTVKAVNPLGSVETTANLTIEEPAGGNAEPPLFVERFEEQNVPQKGEIRLPAKVSGNPVPEVQWLFNNTPLFPSERIQQVYDGENIELIIKDANPETDSGDYKCIASNPIGKTSHGARVIVEVDEVTFTKKLKKTITIEEVQSLTLECETSHVVTTKWFFNGKELSGMDHRVVVEDGKTHKLVIRNTNLRDSGTYTCKVKKQETQSTVEVLQRKPDFIKVLEDYEVTEKDTAILDVELTTEATEVTWYKDGEKITPENKNVEFIKDGKARRLVIRDVTIHDEGQYTCKIEGQECSCELVVIELPPEIVEPLNDVAVTKGENAVFEVELSKGDALVKWFKNGKEIVFNERIQLAIDGKKQSLRIVKAKPEDVGEYSVQVGEQTSKAKLTVEEPLVDFVIRLPDITLATKTTDAEFTVQLSQPDVEVTWCKKGKPIKPNQKHEVFVEGTVRRLVIHDASDEDAGEISCVAENVTSSTKLCVEELKLPPVITSDKDQTIKVKENDDVTFTVKYTGVPTPEACWTTRKVVIPKSKRTIPTIDEQSAKLTIKKVVDDDEGEYTVKLVNPVGEAEASLHLVIMRKPTAPGTPQPLEIMHDSITLYWKAPEDDGKSEIIEYILEYQDVKEEKWTEIRKIKDTTYTISKLKIDTEYVFRSIAVNEVGPSPPSPLSPPIRLVPKVETKAPSVQEPLQDVVSELDKEVTLSCVFGGIPEPKVTWKKNGQVFESRSIRYENRVAKYTIEKTTIETEATYTCVATNEKGSAETSCRLKLQQKPVLEVEDKYLTQKLRTGSILTIPATVRGYPQPTVTWHKETIEQKTTKSVTIETTETTSTYTVKKVTREQSGKYKVTATNESGTTYVECTVQVIDKPSRPQSLEIKDIKKDSIVLEWTPPVDDGGLDIEKYTLEKCDVQNNVWMKVSDFNKDIKSYAVQKLSMNAQYMFRVVAANPIGESEPTESDPVTITKKFEKPSPPRGPTTVSGMNDTSFNLAWEPSETDGGSKIIEYIVEIREETETTYRSVGVTLGTVTNIHVEKVVRNKGYFFRIYARNEVGTSEAFETTEKIVLGRKITPPSPPQNLRAPDVTSRSVTLDWEVPARNGGSEITGYCVEKRSSTSTNWTKVITLDAHQLHYTIDNLKEKCEYWFRVSAENEVGLGAPAVTESISLKTHASEFILVVRNCGSYTEFGFLKAVPSPPTGPLEARVLAANAHIFEWGLPESDGGAPLLGYHIAIRDMKKTMWIEVGRVPAGVLKFQIRDLQENHEYMIRIFAKNEIGLSEPLESEEPYKAMTAGHESLPDEPRTEMSSCNTSSWLRDHHMDADIHSYARGRLLQRDEYFFRLWAELPKSKKKKSSK.

Residues 1–31 (MQRQNPNPYQQQNQQHQQVQQFSSQEYSHSS) show a composition bias toward low complexity. Positions 1–69 (MQRQNPNPYQ…QHHGGSIGGA (69 aa)) are disordered. Positions 32 to 47 (QEQHQEQRISRTEQHV) are enriched in basic and acidic residues. The segment covering 48-62 (QRSQVTTQRQVQQHH) has biased composition (low complexity). Ig-like domains follow at residues 86–177 (PPVF…VYIQ), 255–343 (PQIS…AVLA), 372–461 (PAFV…AQLN), 471–559 (PQFV…ARLY), 618–708 (PQFI…AILS), 751–842 (PQFI…SSIR), 890–981 (PQFK…AQLT), 1024–1115 (PRFL…ATMI), 1158–1249 (PVFV…ACVR), 1291–1381 (PQFT…CSVR), 1424–1515 (PRFL…VELQ), 1558–1643 (PVFT…EAIT), 1691–1781 (PVFT…ASLI), 1824–1917 (PVFV…LNVT), 1958–2050 (PQFG…VNVT), 2089–2180 (PIFL…CNVR), and 2222–2313 (PHFT…TNLR). Residues 236 to 266 (EQDSQLSQELDRNQGPAQAPQISQKPRSSKL) form a disordered region. The cysteines at positions 393 and 445 are disulfide-linked. Intrachain disulfides connect cysteine 1312-cysteine 1365, cysteine 1446-cysteine 1499, and cysteine 1579-cysteine 1632. An intrachain disulfide couples cysteine 1846 to cysteine 1899. Cysteine 2111 and cysteine 2164 are disulfide-bonded. A compositionally biased stretch (basic and acidic residues) spans 2338-2347 (STAPHQRQEP). The disordered stretch occupies residues 2338-2357 (STAPHQRQEPETPGTRQRPV). 3 Ig-like domains span residues 2356 to 2449 (PVFT…MRVV), 2488 to 2581 (PIFT…MKVK), and 2622 to 2715 (PVFT…LKIE). The tract at residues 2731-2750 (PRIGELEAPKEGRPEAPEPT) is disordered. Residues 2734–2746 (GELEAPKEGRPEA) are compositionally biased toward basic and acidic residues. 9 Ig-like domains span residues 2754–2844 (PVFI…GTLK), 2891–2983 (PPVW…TTIF), 3029–3116 (PRFT…AEIS), 3130–3221 (PRFT…TTLN), 3263–3354 (PKFI…ASLK), 3401–3494 (PVFT…MKIQ), 3539–3625 (PEFI…ATVS), 3676–3767 (PKFT…AKVT), and 3811–3901 (PKFT…ATVS). Cysteine 2775 and cysteine 2828 are oxidised to a cystine. Residues cysteine 3152 and cysteine 3205 are joined by a disulfide bond. Intrachain disulfides connect cysteine 3560/cysteine 3613, cysteine 3698/cysteine 3751, and cysteine 3832/cysteine 3885. The TPR 1 repeat unit spans residues 3910–3944 (LQNQVPRGMKRSDALTQMEATIKKYTSEVHLTEDD). Ig-like domains follow at residues 3954–4047 (PRFV…IKVS) and 4092–4181 (PVFV…LKVV). Cysteines 3976 and 4029 form a disulfide. Residues 4204–4229 (AAYQKERQENELEKVFDERKQVLSEQ) are a coiled coil. 2 disordered regions span residues 4226-4254 (LSEQSSHTLKGVEHLKPKQYKPPTPDWQQ) and 4299-4336 (SSQAKGMAQSYEENLQEKTSTTEVQAAPPKGIAQPSES). The span at 4309-4322 (YEENLQEKTSTTEV) shows a compositional bias: polar residues. 4 consecutive Ig-like domains span residues 4394-4482 (PVFT…ANLV), 4497-4585 (PSFV…GDCI), 4604-4692 (PHIV…AQLK), and 4703-4791 (PTIT…AKLT). A TPR 2 repeat occupies 4403 to 4438 (CRVFENEQAKFEVEFEGEPNPTVKWYRESFPIQNSP). A disulfide bond links cysteine 4625 and cysteine 4676. 8 disordered regions span residues 4803 to 4891 (RTID…DKGV), 5318 to 5368 (DELV…QPEP), 5413 to 5648 (RVIP…EVDA), 5667 to 5701 (IKKTKRPKSTKEVTEELFEEQPEEEISPEEEVPQK), 5718 to 5748 (KKTKKPKLTQQVTEEETPHEEIIKESEEVVQ), 5775 to 5982 (KEEE…QRLL), 6034 to 6350 (KRVK…MPVD), and 6364 to 6393 (EEEVVPTEETPEAKQKAHKKRTKRLKEASV). Residues 4822 to 4841 (PESPHAFQPGQQPGQQFGQF) are compositionally biased toward low complexity. Residues 4852-4863 (GRSRQKKPKVRS) show a composition bias toward basic residues. Composition is skewed to basic and acidic residues over residues 5344 to 5357 (QPQEKTFEEAHDEL), 5436 to 5447 (RPKEAVKAEEIQ), 5541 to 5552 (QKPDEQKQELPK), 5591 to 5621 (IEEKLDVAPTKTYEKAVDVLPDEPKVEEKPE), and 5633 to 5645 (PKSEPTEEVHPDE). A TPR 3 repeat occupies 5575-5613 (PVLWERKKKKPQPQDVIEEKLDVAPTKTYEKAVDVLPDE). The segment covering 5681 to 5697 (EELFEEQPEEEISPEEE) has biased composition (acidic residues). Acidic residues-rich tracts occupy residues 5779–5792 (IPTEETVEEEETAE) and 5818–5860 (DVEE…QDEI). The span at 5865 to 5874 (RKVKKAKKPK) shows a compositional bias: basic residues. Acidic residues predominate over residues 5883–5904 (EIEEDQPEEEVLQEEIIGEQEE). Residues 5910–5920 (RKVKSIKKPKK) are compositionally biased toward basic residues. The segment covering 5921–5971 (VVTEKTVDQTEQPEKPEESQAEEVKETVTEEPKKPKPAPEEAKVEQVEKIS) has biased composition (basic and acidic residues). The segment covering 6034-6043 (KRVKKKKPKT) has biased composition (basic residues). The segment covering 6049–6079 (ESTEEPAEETEEFEEEATQPEEVQPVEEIPE) has biased composition (acidic residues). Composition is skewed to basic and acidic residues over residues 6081 to 6092 (PQVKEVADERKT), 6099 to 6133 (RKEEIIEKVEEVALKRVTRPKKELPQEATIEEVRL), 6141 to 6169 (IKPEEVKLEEVDLQHVEKKEDEIVQEEKR), 6195 to 6209 (EAEHIELEKQPKPEE), 6217 to 6234 (KRGEKKQPVEEVLEEKKW), and 6259 to 6268 (PIEEQQKPEK). Positions 6281–6290 (PESEEEELEL) are enriched in acidic residues. Residues 6291 to 6306 (EPLKLPEDKKPKEPKA) show a composition bias toward basic and acidic residues. A compositionally biased stretch (basic residues) spans 6307–6318 (KKEKKKKPKLKK). 2 stretches are compositionally biased toward acidic residues: residues 6325–6349 (EVSEEVAEPFDEPIAEEDEVEEMPV) and 6364–6373 (EEEVVPTEET). Ig-like domains follow at residues 6536-6624 (PRIT…TNII), 6633-6728 (PQFT…NILS), 6741-6830 (PTVT…VVVS), 6841-6929 (PRFI…ATVN), 6942-7034 (PRFV…VKIQ), 7066-7151 (PKII…VAVT), and 7189-7279 (PSLL…FDIS). Residues cysteine 6557 and cysteine 6608 are joined by a disulfide bond. A disulfide bridge links cysteine 6964 with cysteine 7016. The stretch at 7621–7663 (KIQVQTKQIAQMNTKIKKHKKHKQQEQEVSETTIQCEQKETLA) forms a coiled coil. Disordered regions lie at residues 7773–7793 (AKTAESSKELPSKIPKSVKAQ), 9414–9440 (EEDDKQPETTVTVEEVPYEEEKPEEIQ), 9485–9510 (EEDDKQPETTVTVEEVPYEEEKPEEI), 9556–9582 (EEDDKQPETTVTVEEVPYEEEKPEEIQ), 9627–9652 (EEDDKQPETTVTVEEVPYEEEKPEEI), 9698–9724 (EEDDKQPETTVTVEEVPYEEEKPEEIQ), 9769–9796 (EEDDKQPETTVTVEEVPYEEEKPEEIQE), 9838–9865 (TAEEDDKQPETTVTVEEVPYEEEKPEEI), 9911–9937 (EEDDKQPETTVTVEEVPYEEEKPEEIQ), 9982–10008 (EEDDKQPETTVTVEEVPYEEEKPEEIQ), 10053–10080 (EEDDKQPETTVTVEEVPYEEEKPEEIQE), 10125–10149 (ENDKQPETTVTVEEVPYEEEKPEEI), 10195–10220 (EEDDKQPKTTVTVEEVPYEEEKPEEI), 10266–10291 (EEDDKQPETTVTVEEVPYEEEKPEEI), 10337–10364 (EEDDKQPETTVTVEEVPYEEEKPEEIQE), 10408–10433 (EEDDKQPETTVTVEEVPYEEEKPEEI), 10479–10504 (EEDDKQPETTVTVEEVPYEEEKPEEI), 10550–10576 (EEDDKQPETTVTVEEVPYEEEKPEEIQ), 10621–10648 (EEDDKQPETTVTVEEVPYEEEKPEEIQE), 10692–10717 (EEDDKQPETTVTVEEVPYEEEKPEEI), 10763–10788 (EEDDKQPETTVTVEEVPYEEEKPEEI), 10834–10860 (EEDDKQPETTVTVEEVPYEEEKPEEIQ), 10905–10932 (EEDDKQPETTVTVEEVPYEEEKPEEIQE), 11047–11073 (EEDDKQPETTVTVEEVPYEEEKPEEIQ), 11118–11143 (EEDDKQPETTVTVEEVPYEEEKPEEI), 11189–11216 (EEDDKQPETTVTVEEVPYEEEKPEEIQE), 11260–11286 (EEDDKQPETTVTVEEVPYEEEKPEEIQ), 11679–11703 (EELDENKKPKKKTTKTRTFKKRGPD), and 11767–11795 (TEPEEASADALQKPTKDKTPKQKKTLETP). Over residues 7774–7783 (KTAESSKELP) the composition is skewed to basic and acidic residues. Composition is skewed to acidic residues over residues 9429–9440 (VPYEEEKPEEIQ), 9500–9510 (VPYEEEKPEEI), 9571–9582 (VPYEEEKPEEIQ), 9642–9652 (VPYEEEKPEEI), 9713–9724 (VPYEEEKPEEIQ), 9784–9796 (VPYEEEKPEEIQE), 9855–9865 (VPYEEEKPEEI), 9926–9937 (VPYEEEKPEEIQ), 9997–10008 (VPYEEEKPEEIQ), 10068–10080 (VPYEEEKPEEIQE), 10139–10149 (VPYEEEKPEEI), 10210–10220 (VPYEEEKPEEI), 10281–10291 (VPYEEEKPEEI), 10352–10364 (VPYEEEKPEEIQE), 10423–10433 (VPYEEEKPEEI), 10494–10504 (VPYEEEKPEEI), 10565–10576 (VPYEEEKPEEIQ), 10636–10648 (VPYEEEKPEEIQE), 10707–10717 (VPYEEEKPEEI), 10778–10788 (VPYEEEKPEEI), 10849–10860 (VPYEEEKPEEIQ), 10920–10932 (VPYEEEKPEEIQE), 11062–11073 (VPYEEEKPEEIQ), 11133–11143 (VPYEEEKPEEI), 11204–11216 (VPYEEEKPEEIQE), and 11275–11286 (VPYEEEKPEEIQ). A compositionally biased stretch (basic residues) spans 11686–11699 (KPKKKTTKTRTFKK). The segment covering 11780 to 11792 (PTKDKTPKQKKTL) has biased composition (basic and acidic residues). One copy of the TPR 4 repeat lies at 11872-11905 (KTVLQPYQRTEMELPQRARRDSSFKQPVKLTPMK). 18 disordered regions span residues 12003–12201 (FKHS…ADTK), 12451–12471 (TLQVGVTEHEPTKKLKTKKPE), 12685–12767 (TVDD…LPGP), 12943–12971 (IDHENAEEAPKVLKSKVSEEKPKSKKEKS), 13131–13154 (IKKKKVSPKHGPKEQVFEITETRP), 13325–13349 (QSFESPEPTEGEAHETKTKTKKPKK), 13471–13492 (EEYEPTEMDSKKKPKKKVKSHN), 13554–13576 (EADKPIKQPTQDQPIKKEKPLKK), 13702–13792 (KVQK…KSPD), 13891–13914 (EEVQEKSKEAPEEKKAKTVRKAKK), 13951–13994 (MKRK…DEPK), 14073–14094 (TTVPTETPDQDQPSVKQKRTKK), 14109–14322 (EEEA…QVTT), 14354–14377 (EYEPEPVNQDEKPKEPKKKTRKVK), 14414–14448 (PLDSPIDVLDESPKEVQKKDKKSRSTKVPNEETPV), 14533–14566 (EPEIASPQSIEEHPEQSKEKLAPKPKKTVRKVKK), 14583–14720 (KVDL…SELP), and 14756–14789 (VEESQPIVEEVEDEEPQPATEETVEDVTKPKSKK). Basic and acidic residues-rich tracts occupy residues 12022–12035 (ESDHSDKSNKELLH), 12044–12054 (EKIETPDESRK), 12124–12134 (MERTSDIREES), 12183–12201 (LNLRKRQGERPDDDKADTK), 12457–12471 (TEHEPTKKLKTKKPE), and 12685–12709 (TVDDVRVPKDKKKKIDNQKKIKISE). Over residues 12731–12741 (HDEDLQTDEYS) the composition is skewed to acidic residues. Positions 12750–12760 (KSKKKSTKKQK) are enriched in basic residues. Positions 13141–13154 (GPKEQVFEITETRP) are enriched in basic and acidic residues. Residues 13482–13492 (KKPKKKVKSHN) are compositionally biased toward basic residues. The stretch at 13566–13599 (QPIKKEKPLKKKKDVEYPVSLEAFDHTVKVVSEP) is one TPR 5 repeat. Positions 13733–13747 (LVKEDLDQPIERALE) are enriched in basic and acidic residues. The span at 13771-13781 (PKPKKISKPKS) shows a compositional bias: basic residues. Basic and acidic residues-rich tracts occupy residues 13893–13906 (VQEKSKEAPEEKKA) and 13975–13984 (EDKPVEKISE). Basic and acidic residues predominate over residues 14221-14240 (TVEKPLEALHTDSDLEKPDV). The segment covering 14264 to 14274 (KISSEQPKQPS) has biased composition (low complexity). The span at 14282 to 14294 (VTEHDLKPEEEKP) shows a compositional bias: basic and acidic residues. The span at 14542 to 14554 (IEEHPEQSKEKLA) shows a compositional bias: basic and acidic residues. Positions 14555 to 14564 (PKPKKTVRKV) are enriched in basic residues. The span at 14583 to 14599 (KVDLEKYEKVEMPEKPV) shows a compositional bias: basic and acidic residues. Over residues 14652-14662 (ETTVDTTDIPE) the composition is skewed to low complexity. The segment covering 14664-14683 (TPTQTAQPEDTATAQITPSA) has biased composition (polar residues). The span at 14684–14697 (QEEKSTQDDTKDTI) shows a compositional bias: basic and acidic residues. Residues 14756–14771 (VEESQPIVEEVEDEEP) show a composition bias toward acidic residues. Residues 14904–14936 (IPKTTDIGAIKDNGELSRNIEEAEEILKFKPHK) form a TPR 6 repeat. Disordered stretches follow at residues 14956–15208 (EKYI…VSVK), 15301–15329 (TRKKKPKPQQPEEFEVTLKEPKEEQIQPD), 15425–15448 (ISETQSIEEKPIEVAEEAPEETPK), 15578–15597 (IRVSESEPKPEEPSVEQFTV), 15697–15722 (EKPAEAIVEEEEPVVTEPIEEAPKPE), 15825–15876 (EEPK…VEEP), 15951–15973 (ESQPEAVEDKEVSLPKKKPKAPI), and 16181–16206 (QEEEYEEGEDIEEFVVSQQRKPKPLQ). Composition is skewed to basic and acidic residues over residues 14967 to 14989 (EKTPYKKPEKAPKPEEKQEDVKL), 15024 to 15046 (ELKQKPKEVEIVEEQTKKPKDGE), 15069 to 15080 (QIEHPEIPEKVK), 15088 to 15097 (KPKDKSKSEP), 15109 to 15139 (PKEEEAIPEQDVKFRKPERDAPEETDSEIKL), 15169 to 15179 (IEDKAIDDEKK), 15189 to 15198 (QPKEQEIAKE), 15316 to 15325 (VTLKEPKEEQ), 15425 to 15437 (ISETQSIEEKPIE), and 15578 to 15589 (IRVSESEPKPEE). Residues 15703 to 15716 (IVEEEEPVVTEPIE) show a composition bias toward acidic residues. The span at 15951 to 15964 (ESQPEAVEDKEVSL) shows a compositional bias: basic and acidic residues. Positions 16183–16193 (EEYEEGEDIEE) are enriched in acidic residues. The SH3 domain occupies 16409-16470 (ENLNIMYSIC…PAQYLMEPEE (62 aa)). Ig-like domains follow at residues 16501-16590 (PRFI…TELI), 16625-16719 (PTFS…ITLK), 16728-16811 (PQIL…ANLT), 16822-16916 (PPLF…VEVD), 16919-17001 (TFTK…STVE), 17007-17091 (PDFI…CELV), 17097-17180 (PEIV…AKLT), 17184-17270 (PLVD…TKLC), and 17277-17363 (PPVI…AEAS). Cysteines 16940 and 16989 form a disulfide. A Fibronectin type-III 1 domain is found at 17374–17467 (APGTPQPLEI…LSPPIRLVPK (94 aa)). 2 Ig-like domains span residues 17473-17558 (PSVQ…CRLK) and 17563-17653 (PVLE…CTVQ). A disulfide bridge connects residues cysteine 17494 and cysteine 17542. Fibronectin type-III domains follow at residues 17660–17755 (RPQS…TKKF), 17760–17861 (PPRG…TPPS), 17862–17958 (PPQN…THAS), and 17982–18078 (PPTG…AMTA). The TPR 7 repeat unit spans residues 17694-17728 (LEKCDVQNNVWMKVSDFNKDIKSYAVQKLSMNAQY). Residues 17741–17771 (SEPTESDPVTITKKFEKPSPPRGPTTVSGMN) are disordered.

It belongs to the protein kinase superfamily. CAMK Ser/Thr protein kinase family. As to quaternary structure, interacts with Msp300; this interaction mediates the recruitment of Msp300 to the Z-disks. Expressed in the mesoderm at stage 11, several hours before myoblast fusion, and persists in most muscle cells, somatic, visceral and pharyngeal muscles and their precursors, until the third instar. Isoform A: Expressed in the indirect flight muscle (at protein level).

It localises to the cytoplasm. The protein resides in the nucleus. The protein localises to the chromosome. Its subcellular location is the myofibril. It is found in the sarcomere. It localises to the z line. Key component in the assembly and functioning of adult and embryonic striated muscles and muscle tendons. By providing connections at the level of individual microfilaments, it contributes to the fine balance of forces between the two halves of the sarcomere. The size and extensibility of the cross-links are the main determinants of sarcomere extensibility properties of muscle. In non-muscle cells, seems to play a role in chromosome condensation and chromosome segregation during mitosis. Might link the lamina network to chromatin or nuclear actin, or both during interphase. The sequence is that of Titin (sls) from Drosophila melanogaster (Fruit fly).